The chain runs to 148 residues: D-aminoacyl-tRNA deacylase (148 aa).

Residues 137–138 (GP) carry the Gly-cisPro motif, important for rejection of L-amino acids motif.

Belongs to the DTD family. As to quaternary structure, homodimer.

The protein resides in the cytoplasm. The catalysed reaction is glycyl-tRNA(Ala) + H2O = tRNA(Ala) + glycine + H(+). It carries out the reaction a D-aminoacyl-tRNA + H2O = a tRNA + a D-alpha-amino acid + H(+). Its function is as follows. An aminoacyl-tRNA editing enzyme that deacylates mischarged D-aminoacyl-tRNAs. Also deacylates mischarged glycyl-tRNA(Ala), protecting cells against glycine mischarging by AlaRS. Acts via tRNA-based rather than protein-based catalysis; rejects L-amino acids rather than detecting D-amino acids in the active site. By recycling D-aminoacyl-tRNA to D-amino acids and free tRNA molecules, this enzyme counteracts the toxicity associated with the formation of D-aminoacyl-tRNA entities in vivo and helps enforce protein L-homochirality. This is D-aminoacyl-tRNA deacylase from Lacticaseibacillus casei (strain BL23) (Lactobacillus casei).